The primary structure comprises 110 residues: Parvalbumin alpha (110 aa).

At Ser-2 the chain carries N-acetylserine. A phosphoserine mark is found at Ser-2, Ser-8, and Ser-24. 2 EF-hand domains span residues 39–74 (KSAD…FSSD) and 78–110 (LSAK…VAES). Residues Asp-52, Asp-54, Ser-56, Phe-58, Glu-60, and Glu-63 each coordinate Ca(2+). The residue at position 66 (Ser-66) is a Phosphoserine. Ca(2+) contacts are provided by Asp-91, Asp-93, Asp-95, Lys-97, and Glu-102.

In muscle, parvalbumin is thought to be involved in relaxation after contraction. It binds two calcium ions. The protein is Parvalbumin alpha (Pvalb) of Rattus norvegicus (Rat).